The primary structure comprises 1037 residues: Serine/threonine-protein kinase ULK2 (1037 aa).

Residues 9–271 form the Protein kinase domain; sequence YCKRDLVGHG…FEAFFSHPFL (263 aa). ATP-binding positions include 15 to 23 and Lys-39; that span reads VGHGAFAVV. Asp-131 (proton acceptor) is an active-site residue. The disordered stretch occupies residues 319–350; it reads ENLSSPPLGPPNYLQVSKDSASNSSKNSSCDT. The span at 335 to 348 shows a compositional bias: low complexity; it reads SKDSASNSSKNSSC. The residue at position 430 (Ser-430) is a Phosphoserine. 4 disordered regions span residues 452–480, 494–515, 540–594, and 626–697; these read CSPV…PSPL, GHPQ…PQTQ, QKLR…KTPL, and HGPA…NTER. Polar residues-rich tracts occupy residues 506 to 515 and 571 to 585; these read SSGSPVPQTQ and LGTS…SPRN. The span at 632–643 shows a compositional bias: basic and acidic residues; it reads QSKDGNDPRECS. Residues 658-678 are compositionally biased toward polar residues; it reads QQQSKAVFGRSVSTGKLSEQQ. A phosphoserine mark is found at Ser-772 and Ser-781. The CTD-like region stretch occupies residues 813–1037; it reads ELPEETLMER…SALCCSTATV (225 aa).

Belongs to the protein kinase superfamily. Ser/Thr protein kinase family. APG1/unc-51/ULK1 subfamily. As to quaternary structure, component of a complex consisting of ATG13/KIAA0652, ULK1 and RB1CC1/FIP200. Interacts (via C-terminus) with ATG13/KIAA0652. Associates with the mammalian target of rapamycin complex 1 (mTORC1) through an interaction with RPTOR. Interacts with SYNGAP1. In terms of processing, autophosphorylated. In response to nutrient limitation, probably phosphorylated and activated by AMPK, leading to activate autophagy. As to expression, widely expressed.

It is found in the cytoplasmic vesicle membrane. It catalyses the reaction L-seryl-[protein] + ATP = O-phospho-L-seryl-[protein] + ADP + H(+). The enzyme catalyses L-threonyl-[protein] + ATP = O-phospho-L-threonyl-[protein] + ADP + H(+). Functionally, serine/threonine-protein kinase involved in autophagy in response to starvation. Acts upstream of phosphatidylinositol 3-kinase PIK3C3 to regulate the formation of autophagophores, the precursors of autophagosomes. Part of regulatory feedback loops in autophagy: acts both as a downstream effector and a negative regulator of mammalian target of rapamycin complex 1 (mTORC1) via interaction with RPTOR. Activated via phosphorylation by AMPK, also acts as a negative regulator of AMPK through phosphorylation of the AMPK subunits PRKAA1, PRKAB2 and PRKAG1. May phosphorylate ATG13/KIAA0652, FRS2, FRS3 and RPTOR; however such data need additional evidences. Not involved in ammonia-induced autophagy or in autophagic response of cerebellar granule neurons (CGN) to low potassium concentration. Plays a role early in neuronal differentiation and is required for granule cell axon formation: may govern axon formation via Ras-like GTPase signaling and through regulation of the Rab5-mediated endocytic pathways within developing axons. This Mus musculus (Mouse) protein is Serine/threonine-protein kinase ULK2 (Ulk2).